A 163-amino-acid polypeptide reads, in one-letter code: Small heat shock protein C4 (163 aa).

Positions 53-163 (YNNKILSPRT…QSKAKKIKIS (111 aa)) constitute a sHSP domain.

This sequence belongs to the small heat shock protein (HSP20) family.

This Rickettsia felis (strain ATCC VR-1525 / URRWXCal2) (Rickettsia azadi) protein is Small heat shock protein C4 (hspc4-1).